An 875-amino-acid polypeptide reads, in one-letter code: Alanine--tRNA ligase (875 aa).

Residues histidine 565, histidine 569, cysteine 666, and histidine 670 each coordinate Zn(2+).

This sequence belongs to the class-II aminoacyl-tRNA synthetase family. Requires Zn(2+) as cofactor.

The protein resides in the cytoplasm. It carries out the reaction tRNA(Ala) + L-alanine + ATP = L-alanyl-tRNA(Ala) + AMP + diphosphate. Functionally, catalyzes the attachment of alanine to tRNA(Ala) in a two-step reaction: alanine is first activated by ATP to form Ala-AMP and then transferred to the acceptor end of tRNA(Ala). Also edits incorrectly charged Ser-tRNA(Ala) and Gly-tRNA(Ala) via its editing domain. The polypeptide is Alanine--tRNA ligase (Leptothrix cholodnii (strain ATCC 51168 / LMG 8142 / SP-6) (Leptothrix discophora (strain SP-6))).